The following is a 53-amino-acid chain: uncharacterized protein (53 aa).

A run of 2 helical transmembrane segments spans residues 3 to 22 and 26 to 45; these read LFGMIFLIATVAFILLGVLL and AFFFVSILTLIAAIVLFTVL.

The protein resides in the cell membrane. This is an uncharacterized protein from Bacillus subtilis (strain 168).